Consider the following 85-residue polypeptide: Small ribosomal subunit protein bS18A (85 aa).

The protein belongs to the bacterial ribosomal protein bS18 family. Part of the 30S ribosomal subunit. Forms a tight heterodimer with protein bS6.

Functionally, binds as a heterodimer with protein bS6 to the central domain of the 16S rRNA, where it helps stabilize the platform of the 30S subunit. This Mycolicibacterium smegmatis (strain ATCC 700084 / mc(2)155) (Mycobacterium smegmatis) protein is Small ribosomal subunit protein bS18A.